A 357-amino-acid polypeptide reads, in one-letter code: tRNA N6-adenosine threonylcarbamoyltransferase (357 aa).

Residues His115 and His119 each contribute to the Fe cation site. Residues 137 to 141 (LASGG), Asp170, Gly183, and Asn281 each bind substrate. Asp309 provides a ligand contact to Fe cation.

It belongs to the KAE1 / TsaD family. Requires Fe(2+) as cofactor.

The protein localises to the cytoplasm. The catalysed reaction is L-threonylcarbamoyladenylate + adenosine(37) in tRNA = N(6)-L-threonylcarbamoyladenosine(37) in tRNA + AMP + H(+). Required for the formation of a threonylcarbamoyl group on adenosine at position 37 (t(6)A37) in tRNAs that read codons beginning with adenine. Is involved in the transfer of the threonylcarbamoyl moiety of threonylcarbamoyl-AMP (TC-AMP) to the N6 group of A37, together with TsaE and TsaB. TsaD likely plays a direct catalytic role in this reaction. This chain is tRNA N6-adenosine threonylcarbamoyltransferase, found in Bradyrhizobium diazoefficiens (strain JCM 10833 / BCRC 13528 / IAM 13628 / NBRC 14792 / USDA 110).